A 183-amino-acid chain; its full sequence is Holliday junction branch migration complex subunit RuvA (183 aa).

Positions 1-64 are domain I; the sequence is MIVAIEGIVS…EDSHKLYGFL (64 aa). The domain II stretch occupies residues 65-138; the sequence is DTNEQRMFEL…SDAKINIENS (74 aa). Ser-138 is a region of interest (flexible linker). Residues 138–183 form a domain III region; the sequence is SNQDHAQALAALLSLGFKQENILKVLRTCESQNTSELIKEALKKLA.

It belongs to the RuvA family. In terms of assembly, homotetramer. Forms an RuvA(8)-RuvB(12)-Holliday junction (HJ) complex. HJ DNA is sandwiched between 2 RuvA tetramers; dsDNA enters through RuvA and exits via RuvB. An RuvB hexamer assembles on each DNA strand where it exits the tetramer. Each RuvB hexamer is contacted by two RuvA subunits (via domain III) on 2 adjacent RuvB subunits; this complex drives branch migration. In the full resolvosome a probable DNA-RuvA(4)-RuvB(12)-RuvC(2) complex forms which resolves the HJ.

Its subcellular location is the cytoplasm. Its function is as follows. The RuvA-RuvB-RuvC complex processes Holliday junction (HJ) DNA during genetic recombination and DNA repair, while the RuvA-RuvB complex plays an important role in the rescue of blocked DNA replication forks via replication fork reversal (RFR). RuvA specifically binds to HJ cruciform DNA, conferring on it an open structure. The RuvB hexamer acts as an ATP-dependent pump, pulling dsDNA into and through the RuvAB complex. HJ branch migration allows RuvC to scan DNA until it finds its consensus sequence, where it cleaves and resolves the cruciform DNA. The chain is Holliday junction branch migration complex subunit RuvA from Campylobacter lari (strain RM2100 / D67 / ATCC BAA-1060).